A 597-amino-acid polypeptide reads, in one-letter code: Kelch-like protein 21 (597 aa).

Residues 35-103 enclose the BTB domain; that stretch reads LDVTLEAAGG…SYTGRVAVSG (69 aa). The 102-residue stretch at 138 to 239 folds into the BACK domain; the sequence is CLDMQDFAEA…RRFYLLAHVE (102 aa). Kelch repeat units lie at residues 287–335, 336–382, 384–422, 424–463, 464–512, and 513–560; these read ILVL…ALGN, DIYV…VLDG, LYVVAADSTERYDHTTDSWEALQPMTYPMDNCSTTACRG, LYAIGSLAGKETMVMQCYHPDMDLWSLVDCGQLPPWSFAP, KTVT…VLGG, and KLYV…SIFR. The interval 570-597 is disordered; it reads GRGFELDGGSSDMDVGQPRPPQNPAELH. Residues 587–597 are compositionally biased toward pro residues; it reads PRPPQNPAELH.

In terms of assembly, component of the BCR(KLHL21) E3 ubiquitin ligase complex, at least composed of CUL3, KLHL21 and RBX1.

The protein resides in the cytoplasm. It localises to the cytoskeleton. It is found in the spindle. It functions in the pathway protein modification; protein ubiquitination. Its function is as follows. Substrate-specific adapter of a BCR (BTB-CUL3-RBX1) E3 ubiquitin-protein ligase complex required for efficient chromosome alignment and cytokinesis. The BCR(KLHL21) E3 ubiquitin ligase complex regulates localization of the chromosomal passenger complex (CPC) from chromosomes to the spindle midzone in anaphase and mediates the ubiquitination of AURKB. Ubiquitination of AURKB by BCR(KLHL21) E3 ubiquitin ligase complex may not lead to its degradation by the proteasome. The sequence is that of Kelch-like protein 21 (KLHL21) from Bos taurus (Bovine).